The chain runs to 318 residues: NADH-ubiquinone oxidoreductase chain 1 (318 aa).

A run of 8 helical transmembrane segments spans residues 2 to 22, 70 to 90, 100 to 120, 147 to 167, 171 to 191, 217 to 237, 254 to 276, and 294 to 314; these read FMIN…FLTL, MFII…IPLP, LGIL…LWSG, AIIL…TLII, YLWL…STLA, AGPF…MNIF, LYSI…IRAS, and LPLT…LSSI.

The protein belongs to the complex I subunit 1 family. In terms of assembly, core subunit of respiratory chain NADH dehydrogenase (Complex I) which is composed of 45 different subunits.

The protein resides in the mitochondrion inner membrane. It catalyses the reaction a ubiquinone + NADH + 5 H(+)(in) = a ubiquinol + NAD(+) + 4 H(+)(out). Its function is as follows. Core subunit of the mitochondrial membrane respiratory chain NADH dehydrogenase (Complex I) which catalyzes electron transfer from NADH through the respiratory chain, using ubiquinone as an electron acceptor. Essential for the catalytic activity and assembly of complex I. The chain is NADH-ubiquinone oxidoreductase chain 1 (MT-ND1) from Equus asinus (Donkey).